The chain runs to 234 residues: HTH-type transcriptional regulator ArcR (234 aa).

40–129 (VRHYTKGQVI…MAFLCKANDD (90 aa)) contacts a nucleoside 3',5'-cyclic phosphate. Residues 155 to 228 (KFAKDRIIKL…HKNWLVSKHL (74 aa)) form the HTH crp-type domain. The H-T-H motif DNA-binding region spans 188–207 (IQLMSDMAGISRETAGHIIH).

Its subcellular location is the cytoplasm. Functionally, positively regulates the expression of the arcABDCR operon under anaerobic conditions, thus playing an essential role in arginine catabolism. May also control the expression of genes encoding proteins which are involved in anaerobic metabolism. Can bind cyclic AMP. The protein is HTH-type transcriptional regulator ArcR (arcR) of Staphylococcus aureus (strain Mu50 / ATCC 700699).